A 315-amino-acid polypeptide reads, in one-letter code: Olfactory receptor 8J3 (315 aa).

The Extracellular segment spans residues 1–25; it reads MAPENFTRVTEFILTGVSSCPELQI. N-linked (GlcNAc...) asparagine glycosylation is present at asparagine 5. Residues 26-46 form a helical membrane-spanning segment; it reads PLFLVFLVLYVLTMAGNLGII. At 47–54 the chain is on the cytoplasmic side; sequence TLTSVDSR. A helical membrane pass occupies residues 55-75; that stretch reads LQNPMYFFLRHLAIINLGNST. The Extracellular segment spans residues 76–99; it reads VIAPKMLMNFLVKKKTTSFYECAT. The cysteines at positions 97 and 189 are disulfide-linked. A helical membrane pass occupies residues 100–120; it reads QLGGFLFFIVSEVMMLAVMAY. Topologically, residues 121–139 are cytoplasmic; sequence DRYVAICNPLLYMVVVSRR. Residues 140–160 form a helical membrane-spanning segment; sequence LCLLLVSLTYLYGFSTAIVVS. Over 161–197 the chain is Extracellular; that stretch reads PCIFSVSYCSSNIINHFYCDIAPLLALSCSDTYIPET. A helical transmembrane segment spans residues 198–217; sequence IVFISAATNLVFSMITVLVS. Topologically, residues 218–237 are cytoplasmic; sequence YFNIVLSILRIRSPEGRKKA. A helical membrane pass occupies residues 238–258; the sequence is FSTCASHMIAVTVFYGTMLFM. At 259–271 the chain is on the extracellular side; it reads YLQPQTNHSLDTD. Asparagine 265 is a glycosylation site (N-linked (GlcNAc...) asparagine). Residues 272-292 traverse the membrane as a helical segment; that stretch reads KMASVFYTLVIPMLNPLIYSL. Topologically, residues 293 to 315 are cytoplasmic; it reads RNNDVNVALKKFMENPCYSFKSM.

The protein belongs to the G-protein coupled receptor 1 family.

The protein localises to the cell membrane. Its function is as follows. Odorant receptor. In Homo sapiens (Human), this protein is Olfactory receptor 8J3 (OR8J3).